We begin with the raw amino-acid sequence, 374 residues long: Anhydro-N-acetylmuramic acid kinase (374 aa).

9–16 (GTSLDGID) lines the ATP pocket.

Belongs to the anhydro-N-acetylmuramic acid kinase family.

It catalyses the reaction 1,6-anhydro-N-acetyl-beta-muramate + ATP + H2O = N-acetyl-D-muramate 6-phosphate + ADP + H(+). The protein operates within amino-sugar metabolism; 1,6-anhydro-N-acetylmuramate degradation. It participates in cell wall biogenesis; peptidoglycan recycling. Functionally, catalyzes the specific phosphorylation of 1,6-anhydro-N-acetylmuramic acid (anhMurNAc) with the simultaneous cleavage of the 1,6-anhydro ring, generating MurNAc-6-P. Is required for the utilization of anhMurNAc either imported from the medium or derived from its own cell wall murein, and thus plays a role in cell wall recycling. The sequence is that of Anhydro-N-acetylmuramic acid kinase from Methylobacterium nodulans (strain LMG 21967 / CNCM I-2342 / ORS 2060).